Reading from the N-terminus, the 903-residue chain is Protein translocase subunit SecA (903 aa).

Residues glutamine 87, 105–109 (GEGKT), and aspartate 512 contribute to the ATP site. Cysteine 887, cysteine 889, cysteine 898, and histidine 899 together coordinate Zn(2+).

Belongs to the SecA family. As to quaternary structure, monomer and homodimer. Part of the essential Sec protein translocation apparatus which comprises SecA, SecYEG and auxiliary proteins SecDF-YajC and YidC. Zn(2+) serves as cofactor.

The protein localises to the cell inner membrane. It localises to the cytoplasm. The enzyme catalyses ATP + H2O + cellular proteinSide 1 = ADP + phosphate + cellular proteinSide 2.. Functionally, part of the Sec protein translocase complex. Interacts with the SecYEG preprotein conducting channel. Has a central role in coupling the hydrolysis of ATP to the transfer of proteins into and across the cell membrane, serving both as a receptor for the preprotein-SecB complex and as an ATP-driven molecular motor driving the stepwise translocation of polypeptide chains across the membrane. The polypeptide is Protein translocase subunit SecA (Photorhabdus laumondii subsp. laumondii (strain DSM 15139 / CIP 105565 / TT01) (Photorhabdus luminescens subsp. laumondii)).